Reading from the N-terminus, the 217-residue chain is Ribosomal RNA small subunit methyltransferase G (217 aa).

Residues glycine 79, leucine 84, 130-131, and arginine 148 each bind S-adenosyl-L-methionine; that span reads IE.

It belongs to the methyltransferase superfamily. RNA methyltransferase RsmG family.

The protein localises to the cytoplasm. It carries out the reaction guanosine(527) in 16S rRNA + S-adenosyl-L-methionine = N(7)-methylguanosine(527) in 16S rRNA + S-adenosyl-L-homocysteine. Its function is as follows. Specifically methylates the N7 position of guanine in position 527 of 16S rRNA. The chain is Ribosomal RNA small subunit methyltransferase G from Desulfotalea psychrophila (strain LSv54 / DSM 12343).